The chain runs to 268 residues: Small ribosomal subunit protein uS3 (268 aa).

A KH type-2 domain is found at 38-106; the sequence is IRKLLATGME…QVQLNILEVK (69 aa). The interval 218–268 is disordered; that stretch reads VAAPAGDRPRRERPSRPRRSGATGTTATSTEAGRAATATADAPATTEQKEG. Positions 237–268 are enriched in low complexity; the sequence is SGATGTTATSTEAGRAATATADAPATTEQKEG.

It belongs to the universal ribosomal protein uS3 family. Part of the 30S ribosomal subunit. Forms a tight complex with proteins S10 and S14.

Binds the lower part of the 30S subunit head. Binds mRNA in the 70S ribosome, positioning it for translation. The polypeptide is Small ribosomal subunit protein uS3 (Rhodococcus jostii (strain RHA1)).